The following is an 824-amino-acid chain: Type IV secretion system protein PtlC homolog (824 aa).

456–463 (GQSGSGKT) contacts ATP.

This sequence belongs to the TrbE/VirB4 family.

The protein resides in the cell membrane. This Bordetella bronchiseptica (strain ATCC BAA-588 / NCTC 13252 / RB50) (Alcaligenes bronchisepticus) protein is Type IV secretion system protein PtlC homolog (ptlC).